The following is a 457-amino-acid chain: Bifunctional protein GlmU (457 aa).

The pyrophosphorylase stretch occupies residues Met-1–Arg-230. Residues Leu-7–Gly-10, Lys-21, Gln-73, Gly-78–Thr-79, Tyr-104–Asp-106, Gly-140, Glu-155, Asn-170, and Asn-228 contribute to the UDP-N-acetyl-alpha-D-glucosamine site. A Mg(2+)-binding site is contributed by Asp-106. Position 228 (Asn-228) interacts with Mg(2+). The interval Val-231 to Ala-251 is linker. An N-acetyltransferase region spans residues Gly-252–Ser-457. 2 residues coordinate UDP-N-acetyl-alpha-D-glucosamine: Arg-334 and Lys-352. His-364 acts as the Proton acceptor in catalysis. Positions 367 and 378 each coordinate UDP-N-acetyl-alpha-D-glucosamine. Acetyl-CoA is bound by residues Ala-381, Asn-387 to Tyr-388, Ser-406, Ala-424, and Arg-441.

The protein in the N-terminal section; belongs to the N-acetylglucosamine-1-phosphate uridyltransferase family. It in the C-terminal section; belongs to the transferase hexapeptide repeat family. Homotrimer. It depends on Mg(2+) as a cofactor.

The protein localises to the cytoplasm. The catalysed reaction is alpha-D-glucosamine 1-phosphate + acetyl-CoA = N-acetyl-alpha-D-glucosamine 1-phosphate + CoA + H(+). It catalyses the reaction N-acetyl-alpha-D-glucosamine 1-phosphate + UTP + H(+) = UDP-N-acetyl-alpha-D-glucosamine + diphosphate. It functions in the pathway nucleotide-sugar biosynthesis; UDP-N-acetyl-alpha-D-glucosamine biosynthesis; N-acetyl-alpha-D-glucosamine 1-phosphate from alpha-D-glucosamine 6-phosphate (route II): step 2/2. It participates in nucleotide-sugar biosynthesis; UDP-N-acetyl-alpha-D-glucosamine biosynthesis; UDP-N-acetyl-alpha-D-glucosamine from N-acetyl-alpha-D-glucosamine 1-phosphate: step 1/1. Its pathway is bacterial outer membrane biogenesis; LPS lipid A biosynthesis. In terms of biological role, catalyzes the last two sequential reactions in the de novo biosynthetic pathway for UDP-N-acetylglucosamine (UDP-GlcNAc). The C-terminal domain catalyzes the transfer of acetyl group from acetyl coenzyme A to glucosamine-1-phosphate (GlcN-1-P) to produce N-acetylglucosamine-1-phosphate (GlcNAc-1-P), which is converted into UDP-GlcNAc by the transfer of uridine 5-monophosphate (from uridine 5-triphosphate), a reaction catalyzed by the N-terminal domain. This chain is Bifunctional protein GlmU, found in Bordetella bronchiseptica (strain ATCC BAA-588 / NCTC 13252 / RB50) (Alcaligenes bronchisepticus).